We begin with the raw amino-acid sequence, 126 residues long: Protein mmf2, mitochondrial (126 aa).

This sequence belongs to the RutC family.

It localises to the mitochondrion. The protein resides in the cytoplasm. Its function is as follows. Plays a role in the maintenance of mitochondrial DNA. The sequence is that of Protein mmf2, mitochondrial (mmf2) from Schizosaccharomyces pombe (strain 972 / ATCC 24843) (Fission yeast).